The sequence spans 1371 residues: uncharacterized protein (1371 aa).

Residues 1020 to 1048 (WYLSSSKNTPEPRPDPEPTPEGHDNNLRP) form a disordered region. Positions 1029 to 1046 (PEPRPDPEPTPEGHDNNL) are enriched in basic and acidic residues. In terms of domain architecture, Autotransporter spans 1083–1371 (GEPKATSMWM…SAMLGVKYTF (289 aa)).

It is found in the cell outer membrane. This is an uncharacterized protein from Escherichia coli (strain K12).